Reading from the N-terminus, the 155-residue chain is uncharacterized protein (155 aa).

The signal sequence occupies residues Met1–Ala30.

This is an uncharacterized protein from Treponema pallidum (strain Nichols).